The primary structure comprises 77 residues: MWHLKLFAVLVICLLLAVQVHGSPIPELSSAKRRPRRMTPFWRAVSLRPIGASCRDDSECLTRLCRKRRCSLSVAQE.

The N-terminal stretch at 1 to 22 (MWHLKLFAVLVICLLLAVQVHG) is a signal peptide. Positions 23-37 (SPIPELSSAKRRPRR) are excised as a propeptide. Cystine bridges form between C54–C65 and C60–C70.

This sequence belongs to the LEAP2 family.

The protein resides in the secreted. Functionally, has an antimicrobial activity. The sequence is that of Liver-expressed antimicrobial peptide 2 (LEAP2) from Sus scrofa (Pig).